A 281-amino-acid chain; its full sequence is Bifunctional N-acyl-homoserine lactone acylase/prephenate dehydratase (281 aa).

A Prephenate dehydratase domain is found at 6 to 181 (IIAFQGRPGA…NTTRFYIASR (176 aa)). In terms of domain architecture, ACT spans 196–273 (TLLFRVNNQP…EQQEILGVYP (78 aa)). The L-phenylalanine site is built by alanine 207, leucine 208, asparagine 221, and methionine 222.

Homodimer.

It carries out the reaction an N-acyl-L-homoserine lactone + H2O = L-homoserine lactone + a carboxylate. The enzyme catalyses prephenate + H(+) = 3-phenylpyruvate + CO2 + H2O. Its pathway is amino-acid biosynthesis; L-phenylalanine biosynthesis; phenylpyruvate from prephenate: step 1/1. Multifunctional enzyme that acts on N-acyl-homoserine lactones (AHLs), beta-lactam antibiotics and shows prephenate dehydratase activity. Acts as an acylase on AHL and hydrolyzes the amide bond of the acyl side-chain of AHL molecules, releasing homoserine lactone (HSL) and the fatty acid. Can use different 3-oxo-acyl homoserine lactones, such as 3-oxo-decanoyl homoserine lactone, which is the preferred substrate, 3-oxo-octanoyl homoserine lactone, 3-oxo-hexanoyl homoserine lactone and 3-oxo-dodecanoyl homoserine lactone. It can also degrade various beta-lactam antibiotics, including penicillin G, amoxicillin and ampicillin, but not cefotaxime. In addition, it can complement a phenylalanine auxotrophic E.coli mutant, which carries a kanamycin gene inserted into pheA, suggesting that GqqA can also function as a prephenate dehydratase. Involved in bacterial quorum quenching (QQ) and cellulose biofilm formation. The sequence is that of Bifunctional N-acyl-homoserine lactone acylase/prephenate dehydratase from Komagataeibacter europaeus (Gluconacetobacter europaeus).